We begin with the raw amino-acid sequence, 1125 residues long: ATP-dependent DNA helicase Hel308 (1125 aa).

The short motif at 1–29 (MKVDELPIDERIKRVIKERGIEELYPPQA) is the Q motif element. ATP is bound by residues Gln-28 and 46 to 53 (IPTASGKT). One can recognise a Helicase ATP-binding domain in the interval 33–197 (KSGVLEGKNL…WLDASLVVSD (165 aa)). The DEAH box motif lies at 145–148 (DEVH). A Helicase C-terminal domain is found at 226 to 440 (NWESLVLDAV…ELKERLESET (215 aa)). Residues 500–640 (LIGLWIAEGS…LQLLVASLGY (141 aa)) enclose the DOD-type homing endonuclease domain.

This sequence belongs to the helicase family. Hel308 subfamily. In terms of assembly, monomer. This protein undergoes a protein self splicing that involves a post-translational excision of the intervening region (intein) followed by peptide ligation.

The enzyme catalyses Couples ATP hydrolysis with the unwinding of duplex DNA by translocating in the 3'-5' direction.. It carries out the reaction ATP + H2O = ADP + phosphate + H(+). In terms of biological role, DNA-dependent ATPase and 3'-5' DNA helicase that may be involved in repair of stalled replication forks. This chain is ATP-dependent DNA helicase Hel308, found in Thermococcus kodakarensis (strain ATCC BAA-918 / JCM 12380 / KOD1) (Pyrococcus kodakaraensis (strain KOD1)).